The primary structure comprises 439 residues: Lipase 1 (439 aa).

Residues 1–24 (MRCSLRMQLLLLLGLCVFISRIQG) form the signal peptide. Residues 28 to 60 (GGEEDEEDEEEEEEEEESVEDETPEDRLQRKNI) are disordered. Residues 29–51 (GEEDEEDEEEEEEEEESVEDETP) show a composition bias toward acidic residues. 2 N-linked (GlcNAc...) asparagine glycosylation sites follow: asparagine 124 and asparagine 151. The active-site Charge relay system is the serine 197. Residues asparagine 346 and asparagine 379 are each glycosylated (N-linked (GlcNAc...) asparagine). The active-site Charge relay system is the histidine 393. Residue asparagine 426 is glycosylated (N-linked (GlcNAc...) asparagine).

The protein belongs to the AB hydrolase superfamily. Lipase family. In terms of tissue distribution, in 14 hours embryos expression is seen in the foregut/midgut boundary.

It is found in the secreted. Could be a digestive enzyme. The chain is Lipase 1 (Lip1) from Drosophila melanogaster (Fruit fly).